Consider the following 1488-residue polypeptide: Chromosome partition protein MukB (1488 aa).

ATP is bound at residue 34-41; sequence GGNGAGKS. Coiled coils occupy residues 326–418, 444–472, and 509–602; these read LEAD…QYNQ, LDTF…QTAH, and RHLA…QRAP. A flexible hinge region spans residues 666-783; sequence PGGAEDQRLN…SLPIFGRAAR (118 aa). Coiled-coil stretches lie at residues 835 to 923, 977 to 1116, and 1209 to 1265; these read EAEI…AKLE, EMLS…AKAG, and VEAI…LQSV.

It belongs to the SMC family. MukB subfamily. As to quaternary structure, homodimerization via its hinge domain. Binds to DNA via its C-terminal region. Interacts, and probably forms a ternary complex, with MukE and MukF via its C-terminal region. The complex formation is stimulated by calcium or magnesium. Interacts with tubulin-related protein FtsZ.

It is found in the cytoplasm. It localises to the nucleoid. In terms of biological role, plays a central role in chromosome condensation, segregation and cell cycle progression. Functions as a homodimer, which is essential for chromosome partition. Involved in negative DNA supercoiling in vivo, and by this means organize and compact chromosomes. May achieve or facilitate chromosome segregation by condensation DNA from both sides of a centrally located replisome during cell division. The polypeptide is Chromosome partition protein MukB (Salmonella paratyphi B (strain ATCC BAA-1250 / SPB7)).